The following is a 362-amino-acid chain: DNA polymerase IV (362 aa).

The UmuC domain maps to 6–187 (IIHVDMDAFY…LPVSSFHGVG (182 aa)). Mg(2+) is bound by residues aspartate 10 and aspartate 105. Glutamate 106 is a catalytic residue.

It belongs to the DNA polymerase type-Y family. Monomer. It depends on Mg(2+) as a cofactor.

Its subcellular location is the cytoplasm. The catalysed reaction is DNA(n) + a 2'-deoxyribonucleoside 5'-triphosphate = DNA(n+1) + diphosphate. Functionally, poorly processive, error-prone DNA polymerase involved in untargeted mutagenesis. Copies undamaged DNA at stalled replication forks, which arise in vivo from mismatched or misaligned primer ends. These misaligned primers can be extended by PolIV. Exhibits no 3'-5' exonuclease (proofreading) activity. May be involved in translesional synthesis, in conjunction with the beta clamp from PolIII. The sequence is that of DNA polymerase IV from Leptospira interrogans serogroup Icterohaemorrhagiae serovar Lai (strain 56601).